A 334-amino-acid polypeptide reads, in one-letter code: GTPase Obg (334 aa).

An Obg domain is found at 1–159; the sequence is MRFVDEVVIK…KEVRLELNLL (159 aa). The 172-residue stretch at 160–331 folds into the OBG-type G domain; that stretch reads ADVALLGLPN…LAKKLNEFLQ (172 aa). GTP contacts are provided by residues 166–173, 191–195, 212–215, 282–285, and 312–314; these read GLPNAGKS, FTTMY, DIPG, NKID, and SAA. Positions 173 and 193 each coordinate Mg(2+).

The protein belongs to the TRAFAC class OBG-HflX-like GTPase superfamily. OBG GTPase family. As to quaternary structure, monomer. Mg(2+) is required as a cofactor.

The protein resides in the cytoplasm. An essential GTPase which binds GTP, GDP and possibly (p)ppGpp with moderate affinity, with high nucleotide exchange rates and a fairly low GTP hydrolysis rate. Plays a role in control of the cell cycle, stress response, ribosome biogenesis and in those bacteria that undergo differentiation, in morphogenesis control. In Francisella tularensis subsp. mediasiatica (strain FSC147), this protein is GTPase Obg.